The following is a 749-amino-acid chain: 5-methyltetrahydropteroyltriglutamate--homocysteine methyltransferase (749 aa).

5-methyltetrahydropteroyltri-L-glutamate contacts are provided by residues 18–21 (REWK) and lysine 112. Residues 420–422 (IGS) and glutamate 473 contribute to the L-homocysteine site. L-methionine is bound by residues 420 to 422 (IGS) and glutamate 473. A 5-methyltetrahydropteroyltri-L-glutamate-binding site is contributed by tryptophan 550. Aspartate 588 is an L-homocysteine binding site. Aspartate 588 is an L-methionine binding site. Position 594 (glutamate 594) interacts with 5-methyltetrahydropteroyltri-L-glutamate. Residues histidine 630, cysteine 632, and glutamate 654 each coordinate Zn(2+). The Proton donor role is filled by histidine 683. A Zn(2+)-binding site is contributed by cysteine 715.

The protein belongs to the vitamin-B12 independent methionine synthase family. It depends on Zn(2+) as a cofactor.

It carries out the reaction 5-methyltetrahydropteroyltri-L-glutamate + L-homocysteine = tetrahydropteroyltri-L-glutamate + L-methionine. It participates in amino-acid biosynthesis; L-methionine biosynthesis via de novo pathway; L-methionine from L-homocysteine (MetE route): step 1/1. Its function is as follows. Catalyzes the transfer of a methyl group from 5-methyltetrahydrofolate to homocysteine resulting in methionine formation. The polypeptide is 5-methyltetrahydropteroyltriglutamate--homocysteine methyltransferase (Staphylococcus haemolyticus (strain JCSC1435)).